A 179-amino-acid chain; its full sequence is Large ribosomal subunit protein uL5 (179 aa).

Belongs to the universal ribosomal protein uL5 family. As to quaternary structure, part of the 50S ribosomal subunit; part of the 5S rRNA/L5/L18/L25 subcomplex. Contacts the 5S rRNA and the P site tRNA. Forms a bridge to the 30S subunit in the 70S ribosome.

Functionally, this is one of the proteins that bind and probably mediate the attachment of the 5S RNA into the large ribosomal subunit, where it forms part of the central protuberance. In the 70S ribosome it contacts protein S13 of the 30S subunit (bridge B1b), connecting the 2 subunits; this bridge is implicated in subunit movement. Contacts the P site tRNA; the 5S rRNA and some of its associated proteins might help stabilize positioning of ribosome-bound tRNAs. The polypeptide is Large ribosomal subunit protein uL5 (Carboxydothermus hydrogenoformans (strain ATCC BAA-161 / DSM 6008 / Z-2901)).